Consider the following 120-residue polypeptide: Ribosome-binding factor A (120 aa).

This sequence belongs to the RbfA family. Monomer. Binds 30S ribosomal subunits, but not 50S ribosomal subunits or 70S ribosomes.

The protein resides in the cytoplasm. Its function is as follows. One of several proteins that assist in the late maturation steps of the functional core of the 30S ribosomal subunit. Associates with free 30S ribosomal subunits (but not with 30S subunits that are part of 70S ribosomes or polysomes). Required for efficient processing of 16S rRNA. May interact with the 5'-terminal helix region of 16S rRNA. The protein is Ribosome-binding factor A of Chlamydia abortus (strain DSM 27085 / S26/3) (Chlamydophila abortus).